The chain runs to 259 residues: Ras-related protein Rab-34 (259 aa).

M1 carries the post-translational modification N-acetylmethionine. S62, V63, G64, K65, T66, D78, Y81, and T84 together coordinate GTP. Residue T66 coordinates Mg(2+). Positions 71–89 (RFCKDTFDKNYKATIGVDF) match the Switch 1 motif. T84 and D107 together coordinate Mg(2+). The Switch 2 signature appears at 108–127 (TAGQERFKCIASTYYRGAQA). GTP-binding residues include G110, K167, D169, and S198. S241 bears the Phosphoserine mark. 2 S-geranylgeranyl cysteine lipidation sites follow: C257 and C258.

The protein belongs to the small GTPase superfamily. Rab family. Interacts with RILP. The GTP-bound form interacts with REP15. Mg(2+) is required as a cofactor.

The protein resides in the cytoplasm. Its subcellular location is the golgi apparatus. It localises to the cytoplasmic vesicle. The protein localises to the phagosome. It is found in the phagosome membrane. The protein resides in the cell projection. Its subcellular location is the cilium. It localises to the cytoskeleton. The protein localises to the microtubule organizing center. It is found in the centrosome. The protein resides in the centriole. The enzyme catalyses GTP + H2O = GDP + phosphate + H(+). Regulated by guanine nucleotide exchange factors (GEFs) which promote the exchange of bound GDP for free GTP. Regulated by GTPase activating proteins (GAPs) which increase the GTP hydrolysis activity. Inhibited by GDP dissociation inhibitors (GDIs). The small GTPases Rab are key regulators of intracellular membrane trafficking, from the formation of transport vesicles to their fusion with membranes. Rabs cycle between an inactive GDP-bound form and an active GTP-bound form that is able to recruit to membranes different sets of downstream effectors directly responsible for vesicle formation, movement, tethering and fusion. RAB34 transports protein involved in the redistribution of lysosomes to the peri-Golgi region. Plays a role in the maturation of phagosomes that engulf pathogens, such as S.aureus and M.tuberculosis. Plays a role in the fusion of phagosomes with lysosomes. Required for the early steps of intracellular ciliogenesis, the cilium assembly pathway initiated by trafficking and docking of ciliary vesicles to the centrioles in the cytoplasm, followed by axoneme formation in the cytoplasm. After axoneme elongation, the centrioles migrate close to the cell surface so that ciliary vesicles can fuse with the plasma membrane to expose cilia to the extracellular space. It seems dispensable for ciliogenesis via the extracellular pathway where cilium assembly begins after migration and docking of the centriole to the plasma membrane. Also acts as a positive regulator of hedgehog signaling and regulates ciliary function. This chain is Ras-related protein Rab-34, found in Mus musculus (Mouse).